The chain runs to 449 residues: GTPase Der (449 aa).

2 EngA-type G domains span residues 4 to 174 (PIVA…PPKT) and 183 to 358 (LRIA…VQRQ). GTP contacts are provided by residues 10-17 (GRPNVGKS), 57-61 (DTAGV), 126-129 (NKCD), 189-196 (GRPNVGKS), 236-240 (DTAGI), and 301-304 (NKWD). The KH-like domain maps to 359 to 444 (KRVPTSELNN…PIVIVFRSRE (86 aa)).

Belongs to the TRAFAC class TrmE-Era-EngA-EngB-Septin-like GTPase superfamily. EngA (Der) GTPase family. Associates with the 50S ribosomal subunit.

Functionally, GTPase that plays an essential role in the late steps of ribosome biogenesis. The protein is GTPase Der of Chloroflexus aurantiacus (strain ATCC 29366 / DSM 635 / J-10-fl).